The following is a 496-amino-acid chain: Chromosomal replication initiator protein DnaA (496 aa).

The tract at residues 1–76 (MKMDSAVSEE…TELWQEENPQ (76 aa)) is domain I, interacts with DnaA modulators. Residues 76-150 (QILKVEVVVR…AAATGAVLGS (75 aa)) form a domain II region. The domain III, AAA+ region stretch occupies residues 151 to 373 (PLDPRYTFDT…GAFNQLLFRQ (223 aa)). ATP contacts are provided by glycine 197, glycine 199, lysine 200, and threonine 201. The domain IV, binds dsDNA stretch occupies residues 374–496 (SFEPNISIDR…LKRLINDQAA (123 aa)).

Belongs to the DnaA family. Oligomerizes as a right-handed, spiral filament on DNA at oriC.

It is found in the cytoplasm. Functionally, plays an essential role in the initiation and regulation of chromosomal replication. ATP-DnaA binds to the origin of replication (oriC) to initiate formation of the DNA replication initiation complex once per cell cycle. Binds the DnaA box (a 9 base pair repeat at the origin) and separates the double-stranded (ds)DNA. Forms a right-handed helical filament on oriC DNA; dsDNA binds to the exterior of the filament while single-stranded (ss)DNA is stabiized in the filament's interior. The ATP-DnaA-oriC complex binds and stabilizes one strand of the AT-rich DNA unwinding element (DUE), permitting loading of DNA polymerase. After initiation quickly degrades to an ADP-DnaA complex that is not apt for DNA replication. Binds acidic phospholipids. In Brucella abortus biovar 1 (strain 9-941), this protein is Chromosomal replication initiator protein DnaA.